The sequence spans 780 residues: Cullin-5 (780 aa).

The residue at position 34 (Ser-34) is a Phosphoserine. Residue Thr-210 is modified to Phosphothreonine. In terms of domain architecture, Cullin neddylation spans 711–772; it reads RILRTQEAII…HKYIRRDESD (62 aa). Lys-724 is covalently cross-linked (Glycyl lysine isopeptide (Lys-Gly) (interchain with G-Cter in NEDD8)).

It belongs to the cullin family. As to quaternary structure, component of multiple cullin-5-RING E3 ubiquitin-protein ligase complexes (ECS complexes, also named CRL5 complexes) formed of CUL5, Elongin BC (ELOB and ELOC), RNF7/RBX2 and a variable SOCS box domain-containing protein as substrate-specific recognition component. CUL5-containing ECS complexes specifically contain RNF7/RBX2, and not RBX1, as catalytic subunit. Component of the ECS(ASB2) complex with the substrate recognition component ASB2. Component of the ECS(ASB6) complex with the substrate recognition component ASB6. Component of the ECS(ASB7) complex with the substrate recognition component ASB7. Component of the ECS(ASB9) complex with the substrate recognition component ASB9. Component of the ECS(ASB11) complex with the substrate recognition component ASB11. Component of the ECS(ASB12) complex with the substrate recognition component ASB12. Component of the ECS(LRRC41) complex with the substrate recognition component LRRC41. Component of the ECS(SOCS1) complex with the substrate recognition component SOCS1. Component of the ECS(SOCS2) complex with the substrate recognition component SOCS2. Component of the ECS(WSB1) complex with the substrate recognition subunit WSB1. Component of the ECS(SOCS3) complex with the substrate recognition component SOCS3. Component of the ECS(SOCS7) complex with the substrate recognition component SOCS7. Component of the ECS(SPSB1) complex with the substrate recognition component SPSB1. Component of the ECS(SPSB3) complex with the substrate recognition component SPSB3. Component of the ECS(SPSB2) complex with the substrate recognition component SPSB2. Component of the ECS(SPSB4) complex with the substrate recognition component SPSB4. Component of the ECS(RAB40) complex with the substrate recognition subunit RAB40A, RAB40B or RAB40C. Component of the ECS(KLHDC1) complex with the substrate recognition component KLHDC1. Component of the ECS(PCMTD1) complex with the substrate recognition subunit PCMTD1. May also form complexes containing RBX1 and ELOA or VHL; additional evidence is however required to confirm this result in vivo. Interacts (when neddylated) with ARIH2; leading to activate the E3 ligase activity of ARIH2. Interacts with ERCC6; the interaction is induced by DNA damaging agents or inhibitors of RNA polymerase II elongation. Interacts with ELOA (via the BC-box). Interacts (unneddylated form) with DCUN1D1, DCUN1D2, DCUN1D3, DCUN1D4 and DCUN1D5; these interactions promote the cullin neddylation. (Microbial infection) Interacts (via the substrate recognition component) with HIV-1 Vif; forming an active cullin-5-RING E3 ubiquitin-protein ligase complex (ECS complex). In terms of assembly, (Microbial infection) Interacts (via the substrate recognition component) with human adenovirus 5 proteins E1B-55K and E4-orf6. As to quaternary structure, (Microbial infection) Interacts with herpes virus 8 protein LANA1; this interaction promotes the degradation of NF-kappa-B component RELA. (Microbial infection) Interacts with molluscum contagiosum virus protein MC132; this interaction promotes the degradation of NF-kappa-B component RELA. Neddylated; which enhances the ubiquitination activity of ECS complexes and prevents binding of the inhibitor CAND1. Deneddylated via its interaction with the COP9 signalosome (CSN).

The protein localises to the nucleus. It functions in the pathway protein modification; protein ubiquitination. Functionally, core component of multiple cullin-5-RING E3 ubiquitin-protein ligase complexes (ECS complexes, also named CRL5 complexes), which mediate the ubiquitination and subsequent proteasomal degradation of target proteins. Acts a scaffold protein that contributes to catalysis through positioning of the substrate and the ubiquitin-conjugating enzyme. The functional specificity of the E3 ubiquitin-protein ligase complex depends on the variable SOCS box-containing substrate recognition component. Acts as a key regulator of neuron positioning during cortex development: component of various SOCS-containing ECS complexes, such as the ECS(SOCS7) complex, that regulate reelin signaling by mediating ubiquitination and degradation of DAB1. ECS(SOCS1) seems to direct ubiquitination of JAK2. The ECS(SOCS2) complex mediates the ubiquitination and subsequent proteasomal degradation of phosphorylated EPOR and GHR. The ECS(SPSB3) complex catalyzes ubiquitination of nuclear CGAS. ECS(KLHDC1) complex is part of the DesCEND (destruction via C-end degrons) pathway and mediates ubiquitination and degradation of truncated SELENOS selenoprotein produced by failed UGA/Sec decoding, which ends with a glycine. The ECS(ASB9) complex mediates ubiquitination and degradation of CKB. As part of some ECS complex, promotes 'Lys-11'-linked ubiquitination and degradation of BTRC. As part of a multisubunit ECS complex, polyubiquitinates monoubiquitinated POLR2A. As part of the ECS(RAB40C) complex, mediates ANKRD28 ubiquitination and degradation, thereby inhibiting protein phosphatase 6 (PP6) complex activity and focal adhesion assembly during cell migration. As part of the ECS(RAB40A) complex, mediates RHOU 'Lys-48'-linked ubiquitination and degradation, thus inhibiting focal adhesion disassembly during cell migration. As part of the ECS(RAB40B) complex, mediates LIMA1/EPLIN and RAP2 ubiquitination, thereby regulating actin cytoskeleton dynamics and stress fiber formation during cell migration. May form a cell surface vasopressin receptor. Its function is as follows. (Microbial infection) Following infection by HIV-1 virus, CUL5 associates with HIV-1 Vif proteins and forms a cullin-5-RING E3 ubiquitin-protein ligase complex (ECS complex) that catalyzes ubiquitination and degradation of APOBEC3F and APOBEC3G. The complex can also ubiquitinate APOBEC3H to some extent. (Microbial infection) Seems to be involved in proteasomal degradation of p53/TP53 stimulated by adenovirus E1B-55 kDa protein. The protein is Cullin-5 of Homo sapiens (Human).